Here is a 750-residue protein sequence, read N- to C-terminus: GTP pyrophosphokinase rsh (750 aa).

Residues 45 to 144 (YFSHPLEVAA…VKLADRLHNM (100 aa)) enclose the HD domain. The TGS domain occupies 390–451 (DQVFCFTPKG…KNGDEVDIIR (62 aa)). Residues 587-613 (AAKVDPAATTPKPGKRALPIRGTNPDL) are disordered. Residues 676-750 (RISVSAINSP…SVSSAKRVNG (75 aa)) form the ACT domain.

It belongs to the RelA/SpoT family.

The enzyme catalyses GTP + ATP = guanosine 3'-diphosphate 5'-triphosphate + AMP. Functionally, functions as a (p)ppGpp synthase. In eubacteria ppGpp (guanosine 3'-diphosphate 5'-diphosphate) is a mediator of the stringent response that coordinates a variety of cellular activities in response to changes in nutritional abundance. Plays a role in adaptation of Brucella to its intracellular host environment. This chain is GTP pyrophosphokinase rsh (rsh), found in Brucella abortus (strain 2308).